The following is a 744-amino-acid chain: NADH-ubiquinone oxidoreductase 78 kDa subunit, mitochondrial (744 aa).

Polar residues predominate over residues 1-10 (MLRSTLSRSA). A disordered region spans residues 1 to 26 (MLRSTLSRSAWRTGRHQAARNASRAF). Residues 1-33 (MLRSTLSRSAWRTGRHQAARNASRAFSATAQRP) constitute a mitochondrion transit peptide. The region spanning 34-112 (AEVELTIDGK…GMVVKTNSPL (79 aa)) is the 2Fe-2S ferredoxin-type domain. Cysteine 68, cysteine 79, cysteine 82, and cysteine 96 together coordinate [2Fe-2S] cluster. Residues 112 to 151 (LTHKAREGVMEFLLANHPLDCPICDQGGECDLQDQSMRYG) enclose the 4Fe-4S His(Cys)3-ligated-type domain. [4Fe-4S] cluster contacts are provided by histidine 128, cysteine 132, cysteine 135, cysteine 141, cysteine 182, cysteine 185, cysteine 188, and cysteine 232. The 57-residue stretch at 251–307 (LKKTESIDVLDGLGSNIRVDTRGLEVMRILPRLNDEVNEEWINDKTRFACDGLKTQR) folds into the 4Fe-4S Mo/W bis-MGD-type domain.

It belongs to the complex I 75 kDa subunit family. As to quaternary structure, complex I is composed of about 40 different subunits. Requires [2Fe-2S] cluster as cofactor. [4Fe-4S] cluster serves as cofactor.

Its subcellular location is the mitochondrion inner membrane. It carries out the reaction a ubiquinone + NADH + 5 H(+)(in) = a ubiquinol + NAD(+) + 4 H(+)(out). In terms of biological role, core subunit of the mitochondrial membrane respiratory chain NADH dehydrogenase (Complex I) that is believed to belong to the minimal assembly required for catalysis. Complex I functions in the transfer of electrons from NADH to the respiratory chain. The immediate electron acceptor for the enzyme is believed to be ubiquinone. This is the largest subunit of complex I and it is a component of the iron-sulfur (IP) fragment of the enzyme. It may form part of the active site crevice where NADH is oxidized. The protein is NADH-ubiquinone oxidoreductase 78 kDa subunit, mitochondrial (nuo78) of Neurospora crassa (strain ATCC 24698 / 74-OR23-1A / CBS 708.71 / DSM 1257 / FGSC 987).